Reading from the N-terminus, the 480-residue chain is Protein nucleotidyltransferase YdiU (480 aa).

ATP is bound by residues G84, G86, R87, K107, D119, G120, R170, and R177. The active-site Proton acceptor is the D246. The Mg(2+) site is built by N247 and D256. D256 provides a ligand contact to ATP.

The protein belongs to the SELO family. It depends on Mg(2+) as a cofactor. Requires Mn(2+) as cofactor.

The catalysed reaction is L-seryl-[protein] + ATP = 3-O-(5'-adenylyl)-L-seryl-[protein] + diphosphate. It carries out the reaction L-threonyl-[protein] + ATP = 3-O-(5'-adenylyl)-L-threonyl-[protein] + diphosphate. The enzyme catalyses L-tyrosyl-[protein] + ATP = O-(5'-adenylyl)-L-tyrosyl-[protein] + diphosphate. It catalyses the reaction L-histidyl-[protein] + UTP = N(tele)-(5'-uridylyl)-L-histidyl-[protein] + diphosphate. The catalysed reaction is L-seryl-[protein] + UTP = O-(5'-uridylyl)-L-seryl-[protein] + diphosphate. It carries out the reaction L-tyrosyl-[protein] + UTP = O-(5'-uridylyl)-L-tyrosyl-[protein] + diphosphate. In terms of biological role, nucleotidyltransferase involved in the post-translational modification of proteins. It can catalyze the addition of adenosine monophosphate (AMP) or uridine monophosphate (UMP) to a protein, resulting in modifications known as AMPylation and UMPylation. In Pseudoalteromonas atlantica (strain T6c / ATCC BAA-1087), this protein is Protein nucleotidyltransferase YdiU.